The chain runs to 384 residues: DNA replication and repair protein RecF (384 aa).

Glycine 30–serine 37 serves as a coordination point for ATP.

The protein belongs to the RecF family.

The protein resides in the cytoplasm. Its function is as follows. The RecF protein is involved in DNA metabolism; it is required for DNA replication and normal SOS inducibility. RecF binds preferentially to single-stranded, linear DNA. It also seems to bind ATP. The sequence is that of DNA replication and repair protein RecF from Gloeothece citriformis (strain PCC 7424) (Cyanothece sp. (strain PCC 7424)).